A 453-amino-acid polypeptide reads, in one-letter code: uncharacterized protein (453 aa).

This sequence to S.faecalis plasmid PAM373 EP0012.

This is an uncharacterized protein from Listeria innocua serovar 6a (strain ATCC BAA-680 / CLIP 11262).